We begin with the raw amino-acid sequence, 242 residues long: Leucyl/phenylalanyl-tRNA--protein transferase (242 aa).

This sequence belongs to the L/F-transferase family.

It is found in the cytoplasm. It carries out the reaction N-terminal L-lysyl-[protein] + L-leucyl-tRNA(Leu) = N-terminal L-leucyl-L-lysyl-[protein] + tRNA(Leu) + H(+). The enzyme catalyses N-terminal L-arginyl-[protein] + L-leucyl-tRNA(Leu) = N-terminal L-leucyl-L-arginyl-[protein] + tRNA(Leu) + H(+). It catalyses the reaction L-phenylalanyl-tRNA(Phe) + an N-terminal L-alpha-aminoacyl-[protein] = an N-terminal L-phenylalanyl-L-alpha-aminoacyl-[protein] + tRNA(Phe). Functions in the N-end rule pathway of protein degradation where it conjugates Leu, Phe and, less efficiently, Met from aminoacyl-tRNAs to the N-termini of proteins containing an N-terminal arginine or lysine. The protein is Leucyl/phenylalanyl-tRNA--protein transferase of Edwardsiella ictaluri (strain 93-146).